Reading from the N-terminus, the 526-residue chain is Biotin carboxylase 2, chloroplastic (526 aa).

Residues 1-71 (MEATLPVCKS…GVTCRAEKIL (71 aa)) constitute a chloroplast transit peptide. Residues lysine 181, 213-274 (ASEI…PRHI), lysine 223, 229-230 (GG), 265-268 (EKYV), and histidine 273 each bind ATP. Residues 185–382 (RETMKKANVP…LIEEQIRVAM (198 aa)) enclose the ATP-grasp domain. Residue lysine 302 coordinates hydrogencarbonate. ATP is bound by residues glutamate 340 and glutamate 353. 3 residues coordinate Mg(2+): glutamate 340, glutamate 353, and asparagine 355. The Mn(2+) site is built by glutamate 340, glutamate 353, and asparagine 355. 3 residues coordinate hydrogencarbonate: arginine 357, valine 360, and arginine 403. The active site involves arginine 357. Arginine 403 contacts biotin.

Acetyl-CoA carboxylase is a heterohexamer composed of biotin carboxyl carrier protein, biotin carboxylase and two subunits each of ACCase subunit alpha and ACCase plastid-coded subunit beta (accD). The cofactor is Mg(2+). It depends on Mn(2+) as a cofactor.

The protein localises to the plastid. Its subcellular location is the chloroplast. The enzyme catalyses N(6)-biotinyl-L-lysyl-[protein] + hydrogencarbonate + ATP = N(6)-carboxybiotinyl-L-lysyl-[protein] + ADP + phosphate + H(+). It participates in lipid metabolism; malonyl-CoA biosynthesis; malonyl-CoA from acetyl-CoA: step 1/1. Its function is as follows. This protein is a component of the acetyl coenzyme A carboxylase complex; first, biotin carboxylase catalyzes the carboxylation of the carrier protein and then the transcarboxylase transfers the carboxyl group to form malonyl-CoA. This chain is Biotin carboxylase 2, chloroplastic, found in Populus trichocarpa (Western balsam poplar).